The primary structure comprises 239 residues: Ribonuclease PH (239 aa).

Residues Arg86 and Gly124 to Arg126 contribute to the phosphate site.

Belongs to the RNase PH family. Homohexameric ring arranged as a trimer of dimers.

It carries out the reaction tRNA(n+1) + phosphate = tRNA(n) + a ribonucleoside 5'-diphosphate. Functionally, phosphorolytic 3'-5' exoribonuclease that plays an important role in tRNA 3'-end maturation. Removes nucleotide residues following the 3'-CCA terminus of tRNAs; can also add nucleotides to the ends of RNA molecules by using nucleoside diphosphates as substrates, but this may not be physiologically important. Probably plays a role in initiation of 16S rRNA degradation (leading to ribosome degradation) during starvation. This is Ribonuclease PH from Sinorhizobium medicae (strain WSM419) (Ensifer medicae).